We begin with the raw amino-acid sequence, 208 residues long: V-type ATP synthase subunit D (208 aa).

Belongs to the V-ATPase D subunit family.

Its function is as follows. Produces ATP from ADP in the presence of a proton gradient across the membrane. This is V-type ATP synthase subunit D from Streptococcus pyogenes serotype M3 (strain ATCC BAA-595 / MGAS315).